Here is a 1142-residue protein sequence, read N- to C-terminus: Enamelin (1142 aa).

Residues 1–39 (MLVLRCRLGTSFPKLDNLVPKGKMKILLVFLGLLGNSVA) form the signal peptide. Disordered stretches follow at residues 88–193 (QYQM…ISNE), 214–326 (YYSE…PNIR), 398–671 (PANL…QNRW), 874–955 (CCAG…LRRN), 1020–1048 (VIGT…QQQR), and 1062–1092 (LAKH…PTEN). The segment covering 103–114 (HPRKSSAPKRHN) has biased composition (basic residues). N-linked (GlcNAc...) asparagine glycans are attached at residues N114 and N126. Residues 117 to 128 (DQTQETQKPNQT) are compositionally biased toward polar residues. The segment covering 140–162 (KQPSHNQPQPEEEAQPPQAFPPF) has biased composition (low complexity). Pro residues predominate over residues 170–186 (QQPPWQIPQRLPPPGYG). Residues S191 and S216 each carry the phosphoserine modification. Basic and acidic residues predominate over residues 223–234 (DFEKPKEEDPPK). The span at 240 to 285 (TEPTANSTVTETNSTQPNPKGSQGGNDTSPTGNSTPGLNTGNNPPA) shows a compositional bias: polar residues. N-linked (GlcNAc...) asparagine glycans are attached at residues N245, N252, N265, and N296. The span at 429-442 (RNEKIQNPKEKPLG) shows a compositional bias: basic and acidic residues. Composition is skewed to polar residues over residues 452–470 (KNPT…NKSN), 507–516 (SDGQTQSQNL), and 531–544 (SETN…SSYQ). N467 carries an N-linked (GlcNAc...) asparagine glycan. N534 carries an N-linked (GlcNAc...) asparagine glycan. Positions 556–588 (AKEHFPAGRNTWDHQEISPPFKEDPGRQEEHLP) are enriched in basic and acidic residues. Acidic residues predominate over residues 652–661 (NEEDPVDPTG). A compositionally biased stretch (polar residues) spans 924-934 (SPTSILPGQRN). N934 is a glycosylation site (N-linked (GlcNAc...) asparagine). Residues 935–951 (SSEKRESQNPFRDDVST) show a composition bias toward basic and acidic residues. N1040 is a glycosylation site (N-linked (GlcNAc...) asparagine). The span at 1068-1078 (STTGTPSSDGR) shows a compositional bias: polar residues.

Phosphorylated by FAM20C in vitro. In terms of tissue distribution, expressed in tooth particularly in odontoblast, ameloblast and cementoblast.

Its subcellular location is the secreted. It is found in the extracellular space. The protein resides in the extracellular matrix. Involved in the mineralization and structural organization of enamel. Involved in the extension of enamel during the secretory stage of dental enamel formation. The chain is Enamelin (ENAM) from Homo sapiens (Human).